A 429-amino-acid chain; its full sequence is Glutamate-1-semialdehyde 2,1-aminomutase 2 (429 aa).

N6-(pyridoxal phosphate)lysine is present on Lys268.

Belongs to the class-III pyridoxal-phosphate-dependent aminotransferase family. HemL subfamily. Homodimer. Pyridoxal 5'-phosphate serves as cofactor.

It is found in the cytoplasm. The catalysed reaction is (S)-4-amino-5-oxopentanoate = 5-aminolevulinate. It functions in the pathway porphyrin-containing compound metabolism; protoporphyrin-IX biosynthesis; 5-aminolevulinate from L-glutamyl-tRNA(Glu): step 2/2. This Geobacillus thermodenitrificans (strain NG80-2) protein is Glutamate-1-semialdehyde 2,1-aminomutase 2.